A 427-amino-acid polypeptide reads, in one-letter code: Gamma-glutamyl phosphate reductase (427 aa).

The protein belongs to the gamma-glutamyl phosphate reductase family.

Its subcellular location is the cytoplasm. The enzyme catalyses L-glutamate 5-semialdehyde + phosphate + NADP(+) = L-glutamyl 5-phosphate + NADPH + H(+). The protein operates within amino-acid biosynthesis; L-proline biosynthesis; L-glutamate 5-semialdehyde from L-glutamate: step 2/2. In terms of biological role, catalyzes the NADPH-dependent reduction of L-glutamate 5-phosphate into L-glutamate 5-semialdehyde and phosphate. The product spontaneously undergoes cyclization to form 1-pyrroline-5-carboxylate. This chain is Gamma-glutamyl phosphate reductase, found in Rhizobium johnstonii (strain DSM 114642 / LMG 32736 / 3841) (Rhizobium leguminosarum bv. viciae).